The sequence spans 96 residues: Citrate lyase acyl carrier protein (96 aa).

S14 is subject to O-(phosphoribosyl dephospho-coenzyme A)serine.

It belongs to the CitD family. In terms of assembly, oligomer with a subunit composition of (alpha,beta,gamma)6.

It is found in the cytoplasm. Its function is as follows. Covalent carrier of the coenzyme of citrate lyase. This is Citrate lyase acyl carrier protein from Lactiplantibacillus plantarum (strain ATCC BAA-793 / NCIMB 8826 / WCFS1) (Lactobacillus plantarum).